The following is a 186-amino-acid chain: uncharacterized protein (186 aa).

Positions 1-21 are cleaved as a signal peptide; that stretch reads MIHVKYIILGFIMVSSLNLYA.

This is an uncharacterized protein from Rickettsia conorii (strain ATCC VR-613 / Malish 7).